Here is a 255-residue protein sequence, read N- to C-terminus: Electron transfer flavoprotein subunit beta (255 aa).

A2 carries the post-translational modification N-acetylalanine. AMP contacts are provided by residues A9, 39–42 (NPFC), C66, and 123–134 (GKQAIDDDCNQT). Residues 183 to 205 (ADLRLNEPRYATLPNIMKAKKKK) form a recognition loop region. K200 carries the N6,N6,N6-trimethyllysine; by ETFBKMT; alternate modification. At K200 the chain carries N6-acetyllysine; alternate. Position 200 is an N6-methyllysine; alternate (K200). K203 carries the post-translational modification N6,N6,N6-trimethyllysine; by ETFBKMT. K210 is subject to N6-acetyllysine; alternate. K210 carries the N6-succinyllysine; alternate modification. Phosphoserine is present on residues S223 and S226. An N6-acetyllysine modification is found at K238. N6-acetyllysine; alternate is present on K248. At K248 the chain carries N6-succinyllysine; alternate.

The protein belongs to the ETF beta-subunit/FixA family. As to quaternary structure, heterodimer composed of ETFA and ETFB. Identified in a complex that contains ETFA, ETFB and ETFRF1. Interacts with ACADM. Post-translationally, methylated. Trimethylation at Lys-200 and Lys-203 may negatively regulate the activity in electron transfer from acyl-CoA dehydrogenases.

The protein resides in the mitochondrion matrix. Heterodimeric electron transfer flavoprotein that accepts electrons from several mitochondrial dehydrogenases, including acyl-CoA dehydrogenases, glutaryl-CoA and sarcosine dehydrogenase. It transfers the electrons to the main mitochondrial respiratory chain via ETF-ubiquinone oxidoreductase. Required for normal mitochondrial fatty acid oxidation and normal amino acid metabolism. ETFB binds an AMP molecule that probably has a purely structural role. The chain is Electron transfer flavoprotein subunit beta from Sus scrofa (Pig).